The sequence spans 71 residues: Translation initiation factor IF-1 (71 aa).

Positions 1–71 (MSKDDLIQFT…LTKGRVIHRH (71 aa)) constitute an S1-like domain.

Belongs to the IF-1 family. As to quaternary structure, component of the 30S ribosomal translation pre-initiation complex which assembles on the 30S ribosome in the order IF-2 and IF-3, IF-1 and N-formylmethionyl-tRNA(fMet); mRNA recruitment can occur at any time during PIC assembly.

Its subcellular location is the cytoplasm. In terms of biological role, one of the essential components for the initiation of protein synthesis. Stabilizes the binding of IF-2 and IF-3 on the 30S subunit to which N-formylmethionyl-tRNA(fMet) subsequently binds. Helps modulate mRNA selection, yielding the 30S pre-initiation complex (PIC). Upon addition of the 50S ribosomal subunit IF-1, IF-2 and IF-3 are released leaving the mature 70S translation initiation complex. The protein is Translation initiation factor IF-1 of Rickettsia akari (strain Hartford).